Consider the following 597-residue polypeptide: Formate--tetrahydrofolate ligase (597 aa).

Residue 84–91 (TPLGEGKS) participates in ATP binding.

This sequence belongs to the formate--tetrahydrofolate ligase family.

The enzyme catalyses (6S)-5,6,7,8-tetrahydrofolate + formate + ATP = (6R)-10-formyltetrahydrofolate + ADP + phosphate. Its pathway is one-carbon metabolism; tetrahydrofolate interconversion. The chain is Formate--tetrahydrofolate ligase from Dehalococcoides mccartyi (strain ATCC BAA-2266 / KCTC 15142 / 195) (Dehalococcoides ethenogenes (strain 195)).